The sequence spans 351 residues: MCKSDLHDFLHGLPKCEHHVHLEGCLAPDLIFELAKRNNVSLPNEPAYESIEALSHRYGHFTSLDDFLRFYFIGMSVLHHESDFADLAWAYFQKAHADGVHHAEVFFDPQVHRDRGIPYETIVSGFVAGCQRAERELGLTTRLILCFVRHLPVDNAARVYQEALDQEHFDNEVVHGLGWSSTEVGPPKDMFRELYSSASAKGIRLTAHAGEEGDPSYISAALELGAQRIDHGIRLVEDPVLMEKVVRDRIMLTVCPISNLQLRCVESIAHVPIRKFLDAGVMFSINSDDPAYFGGYILDNYCAVQEAFQLTVDEWRVIAENSIKGSWIGEERKTELLKRIDDHVQRHVAAV.

Residues His-19, His-21, and His-208 each contribute to the Zn(2+) site. Catalysis depends on Glu-211, which acts as the Proton donor. Residue Asp-288 participates in Zn(2+) binding. Substrate is bound at residue Asp-289.

Belongs to the metallo-dependent hydrolases superfamily. Adenosine and AMP deaminases family. Adenine deaminase type 2 subfamily. The cofactor is Zn(2+).

The protein resides in the cytoplasm. It localises to the nucleus. It catalyses the reaction adenine + H2O + H(+) = hypoxanthine + NH4(+). Catalyzes the hydrolytic deamination of adenine to hypoxanthine. Plays an important role in the purine salvage pathway and in nitrogen catabolism. The protein is Adenine deaminase (aah1) of Aspergillus oryzae (strain ATCC 42149 / RIB 40) (Yellow koji mold).